The following is a 201-amino-acid chain: Inosine triphosphate pyrophosphatase (201 aa).

ITP is bound at residue Thr-13–Lys-18. Glu-43 contacts Mg(2+). Residues Lys-55, Asp-71–Thr-72, Lys-88, Phe-148–Asp-151, Lys-171, and His-176–Arg-177 contribute to the ITP site.

This sequence belongs to the HAM1 NTPase family. In terms of assembly, homodimer. The cofactor is Mg(2+). Mn(2+) serves as cofactor.

The protein resides in the cytoplasm. It catalyses the reaction ITP + H2O = IMP + diphosphate + H(+). The catalysed reaction is dITP + H2O = dIMP + diphosphate + H(+). The enzyme catalyses XTP + H2O = XMP + diphosphate + H(+). It carries out the reaction N(6)-hydroxy-dATP + H2O = N(6)-hydroxy-dAMP + diphosphate + H(+). Functionally, pyrophosphatase that hydrolyzes the non-canonical purine nucleotides inosine triphosphate (ITP), deoxyinosine triphosphate (dITP) as well as 2'-deoxy-N-6-hydroxylaminopurine triphosphate (dHAPTP) and xanthosine 5'-triphosphate (XTP) to their respective monophosphate derivatives. The enzyme does not distinguish between the deoxy- and ribose forms. Probably excludes non-canonical purines from RNA and DNA precursor pools, thus preventing their incorporation into RNA and DNA and avoiding chromosomal lesions. The polypeptide is Inosine triphosphate pyrophosphatase (Gallus gallus (Chicken)).